A 284-amino-acid chain; its full sequence is 2-dehydro-3-deoxyphosphooctonate aldolase (284 aa).

This sequence belongs to the KdsA family.

It localises to the cytoplasm. It catalyses the reaction D-arabinose 5-phosphate + phosphoenolpyruvate + H2O = 3-deoxy-alpha-D-manno-2-octulosonate-8-phosphate + phosphate. The protein operates within carbohydrate biosynthesis; 3-deoxy-D-manno-octulosonate biosynthesis; 3-deoxy-D-manno-octulosonate from D-ribulose 5-phosphate: step 2/3. It functions in the pathway bacterial outer membrane biogenesis; lipopolysaccharide biosynthesis. The sequence is that of 2-dehydro-3-deoxyphosphooctonate aldolase from Burkholderia mallei (strain NCTC 10247).